The chain runs to 437 residues: Amino-acid acetyltransferase (437 aa).

One can recognise an N-acetyltransferase domain in the interval 289–429 (ENIRLATSFD…EHYNYQRMSK (141 aa)).

This sequence belongs to the acetyltransferase family. ArgA subfamily.

The protein resides in the cytoplasm. It catalyses the reaction L-glutamate + acetyl-CoA = N-acetyl-L-glutamate + CoA + H(+). It participates in amino-acid biosynthesis; L-arginine biosynthesis; N(2)-acetyl-L-ornithine from L-glutamate: step 1/4. The protein is Amino-acid acetyltransferase of Actinobacillus pleuropneumoniae serotype 7 (strain AP76).